Reading from the N-terminus, the 210-residue chain is Probable nicotinate-nucleotide adenylyltransferase (210 aa).

Belongs to the NadD family.

The enzyme catalyses nicotinate beta-D-ribonucleotide + ATP + H(+) = deamido-NAD(+) + diphosphate. It participates in cofactor biosynthesis; NAD(+) biosynthesis; deamido-NAD(+) from nicotinate D-ribonucleotide: step 1/1. Catalyzes the reversible adenylation of nicotinate mononucleotide (NaMN) to nicotinic acid adenine dinucleotide (NaAD). The protein is Probable nicotinate-nucleotide adenylyltransferase of Vesicomyosocius okutanii subsp. Calyptogena okutanii (strain HA).